A 194-amino-acid chain; its full sequence is GTP cyclohydrolase 1 (194 aa).

Residues C83, H86, and C155 each coordinate Zn(2+).

This sequence belongs to the GTP cyclohydrolase I family. Toroid-shaped homodecamer, composed of two pentamers of five dimers.

It catalyses the reaction GTP + H2O = 7,8-dihydroneopterin 3'-triphosphate + formate + H(+). It participates in cofactor biosynthesis; 7,8-dihydroneopterin triphosphate biosynthesis; 7,8-dihydroneopterin triphosphate from GTP: step 1/1. The chain is GTP cyclohydrolase 1 (folE) from Streptococcus pyogenes.